The sequence spans 110 residues: Ribonuclease P protein component 4 (110 aa).

Residues Cys65, Cys68, Cys94, and Cys97 each contribute to the Zn(2+) site.

The protein belongs to the eukaryotic/archaeal RNase P protein component 4 family. In terms of assembly, consists of a catalytic RNA component and at least 4-5 protein subunits. The cofactor is Zn(2+).

Its subcellular location is the cytoplasm. The catalysed reaction is Endonucleolytic cleavage of RNA, removing 5'-extranucleotides from tRNA precursor.. Part of ribonuclease P, a protein complex that generates mature tRNA molecules by cleaving their 5'-ends. The polypeptide is Ribonuclease P protein component 4 (Methanococcus maripaludis (strain C5 / ATCC BAA-1333)).